Here is a 339-residue protein sequence, read N- to C-terminus: MSRIIWKGAITFGLVNIPVVLRPASRSQTLDLDLLDVRDMAPVGYQRINKSTGKPVDKEYIVKGYQYAKDEYVLLNEEDFRQANVEATQTVDIVSFVDAQSIPPYYFDTPYYLEPDKRGERGYALLHETMRRTGRAALALVVLRARQHLAAMLVHGDALVLNTMRFADEVLPISELRLPKATTGKPTGAHAREIEMATKLVEDMSEDWEPEQYRDSYRDDLMARIEEKIDSGKTHQLTPPAEEEEAPRQGAKVIDMVALLRQSLGQRGKEDKEDATPARRKAPARHAAARKQPAAKRAATPPAKRASTAAKTKRAPAKRESHAPAARKSSSTTRRKHAA.

The region spanning 10–187 is the Ku domain; the sequence is ITFGLVNIPV…LPKATTGKPT (178 aa). Disordered stretches follow at residues 230 to 251 and 263 to 339; these read DSGKTHQLTPPAEEEEAPRQGA and SLGQ…KHAA. Over residues 267 to 277 the composition is skewed to basic and acidic residues; it reads RGKEDKEDATP. A compositionally biased stretch (basic residues) spans 278 to 289; the sequence is ARRKAPARHAAA. Residues 290–310 are compositionally biased toward low complexity; that stretch reads RKQPAAKRAATPPAKRASTAA.

This sequence belongs to the prokaryotic Ku family. As to quaternary structure, homodimer. Interacts with LigD.

Functionally, with LigD forms a non-homologous end joining (NHEJ) DNA repair enzyme, which repairs dsDNA breaks with reduced fidelity. Binds linear dsDNA with 5'- and 3'- overhangs but not closed circular dsDNA nor ssDNA. Recruits and stimulates the ligase activity of LigD. This chain is Non-homologous end joining protein Ku, found in Cupriavidus necator (strain ATCC 17699 / DSM 428 / KCTC 22496 / NCIMB 10442 / H16 / Stanier 337) (Ralstonia eutropha).